An 85-amino-acid chain; its full sequence is Large ribosomal subunit protein bL27 (85 aa).

Positions 1–20 (MATKKAGGSTKNGRDSNPKM) are disordered.

It belongs to the bacterial ribosomal protein bL27 family.

The chain is Large ribosomal subunit protein bL27 from Acinetobacter baumannii (strain AB307-0294).